A 362-amino-acid chain; its full sequence is Phosphoserine aminotransferase (362 aa).

An L-glutamate-binding site is contributed by R42. Pyridoxal 5'-phosphate-binding positions include 76-77 (AR), W102, T154, D174, and Q197. K198 bears the N6-(pyridoxal phosphate)lysine mark. 239–240 (NT) lines the pyridoxal 5'-phosphate pocket.

The protein belongs to the class-V pyridoxal-phosphate-dependent aminotransferase family. SerC subfamily. Homodimer. Pyridoxal 5'-phosphate serves as cofactor.

It localises to the cytoplasm. The catalysed reaction is O-phospho-L-serine + 2-oxoglutarate = 3-phosphooxypyruvate + L-glutamate. It carries out the reaction 4-(phosphooxy)-L-threonine + 2-oxoglutarate = (R)-3-hydroxy-2-oxo-4-phosphooxybutanoate + L-glutamate. It participates in amino-acid biosynthesis; L-serine biosynthesis; L-serine from 3-phospho-D-glycerate: step 2/3. It functions in the pathway cofactor biosynthesis; pyridoxine 5'-phosphate biosynthesis; pyridoxine 5'-phosphate from D-erythrose 4-phosphate: step 3/5. Its function is as follows. Catalyzes the reversible conversion of 3-phosphohydroxypyruvate to phosphoserine and of 3-hydroxy-2-oxo-4-phosphonooxybutanoate to phosphohydroxythreonine. This is Phosphoserine aminotransferase from Buchnera aphidicola subsp. Cinara cedri (strain Cc).